Consider the following 793-residue polypeptide: Protein zer-1 homolog (793 aa).

LRR repeat units follow at residues 84–108 (RTSL…LMRH), 187–210 (LHDL…ALGS), and 269–294 (LRHL…ESTT).

The protein belongs to the zyg-11 family.

Serves as substrate adapter subunit in an E3 ubiquitin ligase complex CG12084-cul-2-elongin BC. Targets substrates bearing N-terminal glycine degrons for proteasomal degradation. In Drosophila melanogaster (Fruit fly), this protein is Protein zer-1 homolog.